The sequence spans 121 residues: uncharacterized protein (121 aa).

The signal sequence occupies residues 1–31; the sequence is MILNNKGFIRILEATIAGIMVILVFSYLVMS.

This sequence to B.burgdorferi BB0465 N-terminal region.

This is an uncharacterized protein from Methanocaldococcus jannaschii (strain ATCC 43067 / DSM 2661 / JAL-1 / JCM 10045 / NBRC 100440) (Methanococcus jannaschii).